A 403-amino-acid chain; its full sequence is Zinc metalloproteinase nas-8 (403 aa).

An N-terminal signal peptide occupies residues 1 to 29; sequence MRRNDLLNNKITIFLSSLSLFVIIIPIYA. Residues 30-111 constitute a propeptide that is removed on maturation; sequence AEKDLLPPST…DPKNSESLRR (82 aa). One can recognise a Peptidase M12A domain in the interval 112-307; it reads NGVITGTRKW…LKMNLMYQCS (196 aa). 5 disulfide bridges follow: Cys-154/Cys-306, Cys-176/Cys-195, Cys-338/Cys-372, Cys-345/Cys-365, and Cys-352/Cys-369. Position 203 (His-203) interacts with Zn(2+). Residue Glu-204 is part of the active site. Residues His-207 and His-213 each contribute to the Zn(2+) site. The ShKT domain occupies 338-372; the sequence is CRDRTNLCWRWIDRCKSFFFEQIMKEFCSLSCGYC. Asn-386 is a glycosylation site (N-linked (GlcNAc...) asparagine).

It depends on Zn(2+) as a cofactor.

It is found in the secreted. It carries out the reaction Hydrolysis of peptide bonds in substrates containing five or more amino acids, preferentially with Ala in P1', and Pro in P2'.. Its function is as follows. Metalloprotease. In Caenorhabditis elegans, this protein is Zinc metalloproteinase nas-8 (nas-8).